The sequence spans 893 residues: Dystroglycan 1 (893 aa).

The signal sequence occupies residues 1–27 (MSVDNWLLHPLWGQTFLLLLSVAVAQA). Residues 28 to 406 (HWPSEPSEAV…GQIRPTLTIP (379 aa)) are required for laminin recognition. Residues 47–69 (SMHSVLSDFQEAVPTVVGIPDGT) form an O-glycosylated at one site region. N-linked (GlcNAc...) asparagine glycosylation is present at asparagine 139. An intrachain disulfide couples cysteine 180 to cysteine 262. Positions 314 to 483 (ATPTPVTAIG…PPTRIRTTTS (170 aa)) are mucin-like domain. 3 O-linked (Man6P...) threonine glycosylation sites follow: threonine 315, threonine 317, and threonine 377. A disordered region spans residues 379 to 498 (TLGPIQPTRV…GEPNQRPELK (120 aa)). A compositionally biased stretch (low complexity) spans 409–445 (VEPTAVITPPTTTTKKPRVSTPKPATPSTDSSTTTTR). Positions 461–483 (TTKAPITRLETASPPTRIRTTTS) are O-glycosylated at seven sites with GalNAc. Positions 601–710 (KAPARFKARL…LSIAVTGSGS (110 aa)) constitute a Peptidase S72 domain. N-linked (GlcNAc...) asparagine glycosylation is found at asparagine 639, asparagine 647, and asparagine 659. Topologically, residues 652–751 (SIVVEWTNNT…SSEDDVYLHT (100 aa)) are extracellular. Cysteines 667 and 711 form a disulfide. The segment at 722 to 744 (PSPGSSAAPATEVPDRDPEKSSE) is disordered. Residues 734–744 (VPDRDPEKSSE) show a composition bias toward basic and acidic residues. The chain crosses the membrane as a helical span at residues 752 to 772 (VIPAVVVAAILLIAGIIAMIC). Residues 773–893 (YRKKRKGKLT…YRSPPPYVPP (121 aa)) are Cytoplasmic-facing. A Nuclear localization signal motif is present at residues 774 to 780 (RKKRKGK). Position 788 is a phosphothreonine (threonine 788). The segment at 817-893 (LQEEKAPLPP…YRSPPPYVPP (77 aa)) is required for interaction with CAV3. Residues 821 to 893 (KAPLPPPEYP…YRSPPPYVPP (73 aa)) form a disordered region. Polar residues predominate over residues 830 to 844 (PNQSMPETTPLNQDT). Pro residues predominate over residues 857–868 (NAPPYQPPPPFT). Residues 878–893 (PKNMTPYRSPPPYVPP) are required for binding DMD and UTRN. A PPXY motif motif is present at residues 887–890 (PPPY). Phosphotyrosine; by SRC is present on tyrosine 890.

Monomer. Heterodimer of alpha- and beta-dystroglycan subunits which are the central components of the dystrophin-glycoprotein complex. This complex then can form a dystrophin-associated glycoprotein complex (DGC) which is composed of three subcomplexes: a cytoplasmic complex comprised of DMD (or UTRN), DTNA and a number of syntrophins, such as SNTB1, SNTB2, SNTG1 and SNTG2, the transmembrane dystroglycan complex, and the sarcoglycan-sarcospan complex. Interacts (via the N-terminal of alphaDAG1) with LARGE1; the interaction enhances laminin binding. Interacts with SGCD. Interacts with AGR2 and AGR3. Interacts (betaDAG1) with DMD; the interaction is inhibited by phosphorylation on the PPXY motif. Interacts (betaDAG1, via its PPXY motif) with UTRN (via its WWW and ZZ domains); the interaction is inhibited by phosphorylation on the PPXY motif. Interacts (betaDAG1, via its phosphorylated PPXY motif) with the SH2 domain-containing proteins, FYN, CSK, NCK and SHC. Interacts (betaDAG1) with CAV3 (via a central WW-like domain); the interaction disrupts the binding of DMD. BetaDAG1 directly interacts with ANK3, but not with ANK2; this interaction does not interfere with DMD-binding and is required for retention at costameres. Identified in a dystroglycan complex that contains at least PRX, DRP2, UTRN, DMD and DAG1. Interacts with POMGNT1. BetaDAG1 interacts with CD93. Post-translationally, O-glycosylated. POMGNT1 catalyzes the initial addition of N-acetylglucosamine, giving rise to the GlcNAc(beta1-2)Man(alpha1-)O-Ser/Thr moiety and thus providing the necessary basis for the addition of further carbohydrate moieties. Heavily O-glycosylated comprising of up to two thirds of its mass and the carbohydrate composition differs depending on tissue type. Mucin-type O-glycosylation is important for ligand binding activity. O-mannosylation is found in high abundance in both brain and muscle where the most abundant glycan is Sia-alpha-2-3-Gal-beta-1-4-Glc-NAc-beta-1-2-Man. In muscle, glycosylation on Thr-315, Thr-317, Thr-379 by a phosphorylated O-mannosyl glycan with the structure 2-(N-acetylamido)-2-deoxygalactosyl-beta-1,3-2-(N-acetylamido)-2-deoxyglucosyl-beta-1,4-6-phosphomannose is mediated by like-acetylglucosaminyltransferase (LARGE1) protein amd is required for laminin binding. O-glycosylated in the N-terminal region with a core 1 or possibly core 8 glycan. The brain form displays a unique glycosylation pattern which is absent in other tissues; this form shows enhanced binding to laminin LAMA5 compared to the skeletal muscle form. In terms of processing, N-glycosylated. Autolytic cleavage produces the alpha and beta subunits. In cutaneous cells, as well as in certain pathological conditions, shedding of beta-dystroglycan can occur releasing a peptide of about 30 kDa. Post-translationally, SRC-mediated phosphorylation of the PPXY motif of the beta subunit recruits SH2 domain-containing proteins, but inhibits binding to WWW domain-containing proteins, DMD and UTRN. This phosphorylation also inhibits nuclear entry. Detected in brain and kidney (at protein level). Detected in sciatic nerve (at protein level). Expressed in neurons and muscle cells (at protein level). Expressed in a variety of tissues. In brain, expressed in the hippocampal formation, the olfactory bulb, the cerebellum and the thalamus. In the peripheral nerve system, expressed in Schwann cells.

Its subcellular location is the secreted. It is found in the extracellular space. It localises to the cell membrane. The protein localises to the cytoplasm. The protein resides in the cytoskeleton. Its subcellular location is the nucleus. It is found in the nucleoplasm. It localises to the sarcolemma. The protein localises to the postsynaptic cell membrane. The dystroglycan complex is involved in a number of processes including laminin and basement membrane assembly, sarcolemmal stability, cell survival, peripheral nerve myelination, nodal structure, cell migration, and epithelial polarization. In terms of biological role, extracellular peripheral glycoprotein that acts as a receptor for extracellular matrix proteins containing laminin-G domains, and for certain adenoviruses. Receptor for laminin-2 (LAMA2) and agrin in peripheral nerve Schwann cells. Also acts as a receptor for laminin LAMA5. Functionally, transmembrane protein that plays important roles in connecting the extracellular matrix to the cytoskeleton. Acts as a cell adhesion receptor in both muscle and non-muscle tissues. Receptor for both DMD and UTRN and, through these interactions, scaffolds axin to the cytoskeleton. Also functions in cell adhesion-mediated signaling and implicated in cell polarity. The chain is Dystroglycan 1 from Mus musculus (Mouse).